The sequence spans 147 residues: Hemoglobin subunit beta (147 aa).

The Globin domain maps to 3–147; it reads EWTDSERAII…VVSALGREYH (145 aa). Positions 64 and 93 each coordinate heme b.

It belongs to the globin family. Heterotetramer of two alpha chains and two beta chains. In terms of tissue distribution, red blood cells.

Its function is as follows. Involved in oxygen transport from gills to the various peripheral tissues. This is Hemoglobin subunit beta (hbb) from Gadus morhua (Atlantic cod).